Consider the following 249-residue polypeptide: Galactan endo-beta-1,3-galactanase (249 aa).

Positions 1–21 (MKLFVVLACLAAPGTFPFVDA) are cleaved as a signal peptide. The GH16 domain maps to 34–247 (STYWNNFYPW…KARNVQVTRT (214 aa)). Asn-48 carries an N-linked (GlcNAc...) asparagine glycan. Glu-138 functions as the Nucleophile in the catalytic mechanism. Catalysis depends on Glu-143, which acts as the Proton donor. N-linked (GlcNAc...) asparagine glycosylation occurs at Asn-156.

Belongs to the glycosyl hydrolase 16 family. N-glycosylated.

The enzyme catalyses The enzyme specifically hydrolyzes beta-1,3-galactan and beta-1,3-galactooligosaccharides.. In terms of biological role, specifically hydrolyzes beta-1,3-galactan in an endo-fashion. Requires at least 3 contiguous beta-1,3-residues. In Flammulina velutipes (Agaricus velutipes), this protein is Galactan endo-beta-1,3-galactanase (EN3GAL).